The sequence spans 174 residues: UPF0340 protein MW2038 (174 aa).

It belongs to the UPF0340 family.

This is UPF0340 protein MW2038 from Staphylococcus aureus (strain MW2).